The primary structure comprises 378 residues: MRFCVFGFLSLFLIVSPASAWFFPNSTAVPPSLRNTTRVFWDAFSNFTGCHHGQNVDGLYRIKKYFQRFGYIPETFSGNFTDDFDDILKAAVELYQTNFNLNVTGELDALTIQHIVIPRCGNPDVVNGTSLMHGGRRKTFEVNFSRTHLHAVKRYTLFPGEPRWPRNRRDLTYAFDPKNPLTEEVKSVFSRAFGRWSDVTALNFTLSESFSTSDITIGFYTGDHGDGEPFDGVLGTLAHAFSPPSGKFHLDADENWVVSGDLDSFLSVTAAVDLESVAVHEIGHLLGLGHSSVEESIMYPTITTGKRKVDLTNDDVEGIQYLYGANPNFNGTTSPPSTTKHQRDTGGFSAAWRIDGSSRSTIVSLLLSTVGLVLWFLP.

An N-terminal signal peptide occupies residues 1-20; the sequence is MRFCVFGFLSLFLIVSPASA. Residues 21–154 constitute a propeptide, activation peptide; that stretch reads WFFPNSTAVP…SRTHLHAVKR (134 aa). N-linked (GlcNAc...) asparagine glycans are attached at residues asparagine 25, asparagine 35, asparagine 46, asparagine 79, and asparagine 102. The Cysteine switch motif lies at 118-125; it reads PRCGNPDV. Residue cysteine 120 participates in Zn(2+) binding. Residues asparagine 127, asparagine 143, and asparagine 203 are each glycosylated (N-linked (GlcNAc...) asparagine). Residue histidine 280 coordinates Zn(2+). Glutamate 281 is a catalytic residue. The Zn(2+) site is built by histidine 284 and histidine 290. The N-linked (GlcNAc...) asparagine glycan is linked to asparagine 330. Serine 349 is lipidated: GPI-anchor amidated serine. A propeptide spans 350–378 (removed in mature form); that stretch reads AAWRIDGSSRSTIVSLLLSTVGLVLWFLP.

It belongs to the peptidase M10A family. Matrix metalloproteinases (MMPs) subfamily. Zn(2+) serves as cofactor. As to expression, mostly expressed in roots, and, to a lower extent, in flowers, leaves and stems.

Its subcellular location is the cell membrane. Repressed by acetohydroxamic acid (AHA). Its function is as follows. Matrix metalloproteinases (MMPs) or matrixins may play a role in the degradation and remodeling of the extracellular matrix (ECM) during development or in response to stresses. Required for plant growth, morphogenesis, and development with particular relevance for flowering and senescence. Active on McaPLGLDpaAR-NH(2) (QF24) and myelin basic protein (MBP) and, to some extent, on beta-casein. The protein is Metalloendoproteinase 2-MMP of Arabidopsis thaliana (Mouse-ear cress).